Here is a 431-residue protein sequence, read N- to C-terminus: Inactive polypeptide N-acetylgalactosaminyltransferase-like protein 5 (431 aa).

Topologically, residues 1–4 (MKSV) are cytoplasmic. A helical; Signal-anchor for type II membrane protein membrane pass occupies residues 5–27 (IIQGLFCGFLAIGLWASMLLLFL). Over 28 to 431 (HLEQEDMLEN…TERKRKKNRF (404 aa)) the chain is Lumenal. The N-linked (GlcNAc...) asparagine glycan is linked to Asn-68. Disulfide bonds link Cys-105–Cys-336 and Cys-327–Cys-403. A catalytic subdomain A region spans residues 114 to 224 (LPTASIIICF…RVWLEPLLHA (111 aa)). Residues 282 to 344 (PIRSPAMTGG…PCSRVGYNSK (63 aa)) are catalytic subdomain B. Asn-353 and Asn-390 each carry an N-linked (GlcNAc...) asparagine glycan.

This sequence belongs to the glycosyltransferase 2 family. GalNAc-T subfamily. Mn(2+) is required as a cofactor. As to expression, expressed in testis. Mainly expressed in the round and elongated spermatids during spermiogenesis, not in the outermost cells of the seminiferous tubules, which contain spermatogonia and somatic Sertoli cells. Present in the juxtanuclear space in the round spermatids, not in the acrosomal vesicles. In the elongating spermatids, localizes strongly in the acroplaxome, the region between the developing acrosome and nucleus. During differentiation, also weakly detected in the transient manchette containing microtubules. In epididymal spermatozoa, weakly detected in the midpiece, but concentrates mainly in the neck region around the head-tail coupling apparatus (at protein level).

It is found in the late endosome membrane. Functionally, probable inactive glycosyltransferase required during spermatid development. May participate in protein loading into the acrosomes and accumulation of ubiquitin-proteasome systems around the head-tail coupling apparatus region. The chain is Inactive polypeptide N-acetylgalactosaminyltransferase-like protein 5 (Galntl5) from Mus musculus (Mouse).